A 429-amino-acid polypeptide reads, in one-letter code: Adenylosuccinate synthetase (429 aa).

GTP contacts are provided by residues 12 to 18 (GDEGKGK) and 40 to 42 (GHT). Residue Asp-13 is the Proton acceptor of the active site. 2 residues coordinate Mg(2+): Asp-13 and Gly-40. IMP contacts are provided by residues 13-16 (DEGK), 38-41 (NAGH), Thr-129, Arg-143, Gln-224, Thr-239, and Arg-303. His-41 functions as the Proton donor in the catalytic mechanism. Residue 299–305 (VTTGRAR) coordinates substrate. GTP contacts are provided by residues Arg-305, 331–333 (KLD), and 413–415 (GVG).

Belongs to the adenylosuccinate synthetase family. As to quaternary structure, homodimer. The cofactor is Mg(2+).

It localises to the cytoplasm. It carries out the reaction IMP + L-aspartate + GTP = N(6)-(1,2-dicarboxyethyl)-AMP + GDP + phosphate + 2 H(+). It participates in purine metabolism; AMP biosynthesis via de novo pathway; AMP from IMP: step 1/2. In terms of biological role, plays an important role in the de novo pathway of purine nucleotide biosynthesis. Catalyzes the first committed step in the biosynthesis of AMP from IMP. The protein is Adenylosuccinate synthetase of Rhodococcus erythropolis (strain PR4 / NBRC 100887).